The primary structure comprises 368 residues: Ubl carboxyl-terminal hydrolase 18 (368 aa).

The mediates interaction with IFNAR2 stretch occupies residues 31 to 48; that stretch reads MKRKRVLSRDLCSAWDSP. The segment at 48 to 109 is mediates interaction with STAT2; that stretch reads PHGLVGLHNI…LLLLLEKMQD (62 aa). The region spanning 52–366 is the USP domain; sequence VGLHNIGQTC…TAYLLVYTKT (315 aa). Cysteine 61 acts as the Nucleophile in catalysis. The interval 299-308 is mediates interaction with STAT2 and necessary for the negative regulation of the type I IFN signaling pathway; it reads ELFAVIAHVG. Positions 309-368 are mediates interaction with IFNAR2; it reads MADFGHYCAYIRNPVDGKWFCFNDSHVCWVTWKDVQCTYGNHRYRWRETAYLLVYTKTGS. Residue histidine 314 is the Proton acceptor of the active site.

It belongs to the peptidase C19 family. In terms of assembly, interacts with STAT2; the interaction is direct. Interacts with IFNAR2; indirectly via STAT2, it negatively regulates the assembly of the ternary interferon-IFNAR1-IFNAR2 complex and inhibits type I interferon signaling. Interacts with STING1. Interacts with USP20.

The enzyme catalyses Thiol-dependent hydrolysis of ester, thioester, amide, peptide and isopeptide bonds formed by the C-terminal Gly of ubiquitin (a 76-residue protein attached to proteins as an intracellular targeting signal).. In terms of biological role, interferon-induced ISG15-specific protease that plays a crucial role for maintaining a proper balance of ISG15-conjugated proteins in cells. Regulates protein ISGylation by efficiently cleaving ISG15 conjugates linked via isopeptide bonds. Regulates T-cell activation and T-helper 17 (Th17) cell differentiation by deubiquitinating TAK1, likely to keep TAK1-TAB complexes in steady conditions. In turn, restricts activation of NF-kappa-B, NFAT, and JNK as well as expression of IL2 in T-cells after TCR activation. Acts as a molecular adapter with USP20 to promote innate antiviral response through deubiquitinating STING1. Involved also in the negative regulation of the inflammatory response triggered by type I interferon. Upon recruitment by STAT2 to the type I interferon receptor subunit IFNAR2 interferes with the assembly of the ternary interferon-IFNAR1-IFNAR2 complex and acts as a negative regulator of the type I interferon signaling pathway. This is Ubl carboxyl-terminal hydrolase 18 (Usp18) from Mus musculus (Mouse).